The sequence spans 424 residues: Histidine--tRNA ligase (424 aa).

The protein belongs to the class-II aminoacyl-tRNA synthetase family. Homodimer.

The protein resides in the cytoplasm. The catalysed reaction is tRNA(His) + L-histidine + ATP = L-histidyl-tRNA(His) + AMP + diphosphate + H(+). This Shewanella pealeana (strain ATCC 700345 / ANG-SQ1) protein is Histidine--tRNA ligase.